We begin with the raw amino-acid sequence, 381 residues long: MSSQAFTSVHPNAATSDVNVTIDTFVAKLKRRQVQGSYAIALETLQLLMRFISAARWNHVNDLIEQIRDLGNSLEKAHPTAFSCGNVIRRILAVLRDEVEEDTMSTTVTSTSVAEPLISSMFNLLQKPEQPHQNRKNSSGSSSMKTKTDYRQVAIQGIKDLIDEIKNIDEGIQQIAIDLIHDHEILLTPTPDSKTVLKFLITARERSNRTFTVLVTEGFPNNTKNAHEFAKKLAQHNIETLVVPDSAVFALMSRVGKVIIGTKAVFVNGGTISSNSGVSSVCECAREFRTPVFAVAGLYKLSPLYPFDVEKFVEFGGSQRILPRMDPRKRLDTVNQITDYVPPENIDIYITNVGGFNPSFIYRIAWDNYKQIDVHLDKNKA.

The interval leucine 125–threonine 148 is disordered. The span at lysine 136 to lysine 145 shows a compositional bias: polar residues.

This sequence belongs to the eIF-2B alpha/beta/delta subunits family. In terms of assembly, component of the translation initiation factor 2B (eIF2B) complex which is a heterodecamer of two sets of five different subunits: alpha, beta, gamma, delta and epsilon. Subunits alpha, beta and delta comprise a regulatory subcomplex and subunits epsilon and gamma comprise a catalytic subcomplex. Within the complex, the hexameric regulatory complex resides at the center, with the two heterodimeric catalytic subcomplexes bound on opposite sides.

It is found in the cytoplasm. The protein localises to the cytosol. Functionally, acts as a component of the translation initiation factor 2B (eIF2B) complex, which catalyzes the exchange of GDP for GTP on the eukaryotic initiation factor 2 (eIF2) complex gamma subunit. Its guanine nucleotide exchange factor activity is repressed when bound to eIF2 complex phosphorylated on the alpha subunit, thereby limiting the amount of methionyl-initiator methionine tRNA available to the ribosome and consequently global translation is repressed. It activates the synthesis of GCN4 in yeast under amino acid starvation conditions by suppressing the inhibitory effects of multiple AUG codons present in the leader of GCN4 mRNA. It may promote either repression or activation of GCN4 expression depending on amino acid availability. GCD6 and GCD7 repress GCN4 expression at the translational level by ensuring that ribosomes which have translated UORF1 will reinitiate at UORF2, -3, or -4 and thus fail to reach the GCN4 start site. This chain is Translation initiation factor eIF2B subunit beta (GCD7), found in Saccharomyces cerevisiae (strain ATCC 204508 / S288c) (Baker's yeast).